Here is a 519-residue protein sequence, read N- to C-terminus: Methionine--tRNA ligase (519 aa).

The short motif at 11–21 (AYPNAAPHVGH) is the 'HIGH' region element. A 'KMSKS' region motif is present at residues 299-303 (KMSKS). Lys-302 is a binding site for ATP. The tract at residues 500–519 (LPPPTGVFPRYQPPQPPEGK) is disordered.

It belongs to the class-I aminoacyl-tRNA synthetase family. MetG type 2B subfamily. Monomer.

The protein resides in the cytoplasm. It carries out the reaction tRNA(Met) + L-methionine + ATP = L-methionyl-tRNA(Met) + AMP + diphosphate. In terms of biological role, is required not only for elongation of protein synthesis but also for the initiation of all mRNA translation through initiator tRNA(fMet) aminoacylation. In Mycobacterium tuberculosis (strain ATCC 25618 / H37Rv), this protein is Methionine--tRNA ligase.